A 283-amino-acid chain; its full sequence is Circadian clock oscillator protein KaiA (283 aa).

The interval 3–133 is psR domain, binds oxidized quinones; sequence QSTALTICGL…VKLCPGCAVP (131 aa). A KaiA N-terminal domain is found at 3–163; it reads QSTALTICGL…RLSQKLKERL (161 aa). The flexible linker stretch occupies residues 164–172; that stretch reads GYLGVYYKR. The 109-residue stretch at 173–281 folds into the KaiA C-terminal domain; the sequence is DTAFFFRRMS…CEMYRRSIPR (109 aa).

Homodimer. The KaiABC complex composition changes during the circadian cycle to control KaiC phosphorylation. Complexes KaiC(6), KaiA(2-4):KaiC(6), KaiB(6):KaiC(6) and KaiC(6):KaiB(6):KaiA(12) are among the most important forms, many form cooperatively. KaiA and CikA bind to the same region of the KaiB(fs) form and therefore compete.

Functionally, key component of the KaiABC oscillator complex, which constitutes the main circadian regulator in cyanobacteria. Complex composition changes during the circadian cycle to control KaiC phosphorylation. KaiA stimulates KaiC autophosphorylation, while KaiB sequesters KaiA, leading to KaiC autodephosphorylation. KaiA binding to the KaiC CII domain during the subjective day yields KaiA(2-4):KaiC(6) complexes which stimulate KaiC autophosphorylation. Phospho-Ser-431 KaiC accumulation triggers binding of KaiB during the subjective night to form the KaiB(6):KaiC(6) complex, leading to changes in the output regulators CikA and SasA. KaiB(6):KaiC(6) formation exposes a site for KaiA binding on KaiB that sequesters KaiA from KaiC's CII domain, making the KaiC(6):KaiB(6):KaiA(12) complex resulting in KaiC autodephosphorylation. Complete dephosphorylation of KaiC leads to dissociation of KaiA(2):KaiB(1), completing 1 cycle of the Kai oscillator. In terms of biological role, binds oxidized quinones via the N-terminal PsR domain, allowing it to sense redox changes and possibly mediate clock input. The chain is Circadian clock oscillator protein KaiA from Thermostichus vulcanus (Synechococcus vulcanus).